Reading from the N-terminus, the 427-residue chain is UDP-N-acetyl-D-mannosamine dehydrogenase (427 aa).

NAD(+) is bound by residues Tyr-19, Ile-20, Asp-39, Arg-44, Thr-91, and Thr-130. UDP-N-acetyl-alpha-D-mannosaminouronate-binding residues include Arg-155, Val-156, Lys-207, Asn-211, Arg-214, His-245, Arg-247, and Gly-258. Catalysis depends on Lys-207, which acts as the Proton donor/acceptor. Cys-261 (nucleophile) is an active-site residue. UDP-N-acetyl-alpha-D-mannosaminouronate-binding residues include Tyr-318 and Lys-319. Arg-326 contacts NAD(+). A UDP-N-acetyl-alpha-D-mannosaminouronate-binding site is contributed by Lys-404.

It belongs to the UDP-glucose/GDP-mannose dehydrogenase family. Homotetramer; probably dimer of dimers.

It catalyses the reaction UDP-N-acetyl-alpha-D-mannosamine + 2 NAD(+) + H2O = UDP-N-acetyl-alpha-D-mannosaminouronate + 2 NADH + 3 H(+). Functionally, catalyzes the four-electron oxidation of UDP-N-acetyl-D-mannosamine (UDP-ManNAc), reducing NAD(+) and releasing UDP-N-acetylmannosaminuronic acid (UDP-ManNAcA). The sequence is that of UDP-N-acetyl-D-mannosamine dehydrogenase (wecC) from Methanococcus vannielii (strain ATCC 35089 / DSM 1224 / JCM 13029 / OCM 148 / SB).